Reading from the N-terminus, the 314-residue chain is 1,4-dihydroxy-2-naphthoyl-CoA synthase (314 aa).

Residues Arg58, 103–107, Tyr115, 157–161, Thr184, Ser190, Tyr287, and Lys302 each bind substrate; these read SGGDQ and WAAGG.

Belongs to the enoyl-CoA hydratase/isomerase family. MenB subfamily.

It catalyses the reaction 2-succinylbenzoyl-CoA + H(+) = 1,4-dihydroxy-2-naphthoyl-CoA + H2O. The protein operates within quinol/quinone metabolism; 1,4-dihydroxy-2-naphthoate biosynthesis; 1,4-dihydroxy-2-naphthoate from chorismate: step 6/7. It functions in the pathway quinol/quinone metabolism; menaquinone biosynthesis. Functionally, converts o-succinylbenzoyl-CoA (OSB-CoA) to 1,4-dihydroxy-2-naphthoyl-CoA (DHNA-CoA). The chain is 1,4-dihydroxy-2-naphthoyl-CoA synthase from Mycobacterium tuberculosis (strain CDC 1551 / Oshkosh).